Reading from the N-terminus, the 327-residue chain is tRNA uridine(34) hydroxylase (327 aa).

In terms of domain architecture, Rhodanese spans 123 to 217 (SDPEVLVVDT…YLEEVPQEQS (95 aa)). Cysteine 177 serves as the catalytic Cysteine persulfide intermediate.

Belongs to the TrhO family.

It carries out the reaction uridine(34) in tRNA + AH2 + O2 = 5-hydroxyuridine(34) in tRNA + A + H2O. Functionally, catalyzes oxygen-dependent 5-hydroxyuridine (ho5U) modification at position 34 in tRNAs. The chain is tRNA uridine(34) hydroxylase from Vibrio cholerae serotype O1 (strain ATCC 39315 / El Tor Inaba N16961).